We begin with the raw amino-acid sequence, 65 residues long: Large ribosomal subunit protein uL29 (65 aa).

This sequence belongs to the universal ribosomal protein uL29 family.

This is Large ribosomal subunit protein uL29 from Buchnera aphidicola subsp. Baizongia pistaciae (strain Bp).